Here is a 237-residue protein sequence, read N- to C-terminus: Phosphoribosylaminoimidazole-succinocarboxamide synthase (237 aa).

The protein belongs to the SAICAR synthetase family.

The catalysed reaction is 5-amino-1-(5-phospho-D-ribosyl)imidazole-4-carboxylate + L-aspartate + ATP = (2S)-2-[5-amino-1-(5-phospho-beta-D-ribosyl)imidazole-4-carboxamido]succinate + ADP + phosphate + 2 H(+). It participates in purine metabolism; IMP biosynthesis via de novo pathway; 5-amino-1-(5-phospho-D-ribosyl)imidazole-4-carboxamide from 5-amino-1-(5-phospho-D-ribosyl)imidazole-4-carboxylate: step 1/2. The protein is Phosphoribosylaminoimidazole-succinocarboxamide synthase of Serratia proteamaculans (strain 568).